The chain runs to 230 residues: Preflagellin peptidase (230 aa).

Residue M1 is a topological domain, cytoplasmic. Residues 2 to 18 (IEYIIGALGLIIASVQD) form a helical membrane-spanning segment. The Extracellular segment spans residues 19–23 (FRSRE). Residues 24 to 46 (IEDYIWIFLAVFGVLFAIYSSIT) traverse the membrane as a helical segment. Residues 47–49 (LLD) lie on the Cytoplasmic side of the membrane. The chain crosses the membrane as a helical span at residues 50-72 (YSILINSISGFVICFILGYMMFL). At 73–78 (SGIGGG) the chain is on the extracellular side. The helical transmembrane segment at 79–89 (DGKMLIGLGAL) threads the bilayer. At 90–110 (VPKFQMPIYTSLGTLLNLNYV) the chain is on the cytoplasmic side. A helical transmembrane segment spans residues 111 to 139 (PTFPIMVFINGIFFMVFLPFVILFRNILN). Topologically, residues 140–204 (GARPKTGKEF…EEIWVTPQIP (65 aa)) are extracellular. Residues 205–216 (LIIPITLSYLVT) form a helical membrane-spanning segment. At 217 to 230 (PIIGDRILDFLIPF) the chain is on the cytoplasmic side.

This sequence belongs to the peptidase A24 family. Archaeal preflagellin peptidase subfamily.

It localises to the cell membrane. It carries out the reaction Cleaves the signal peptide of 3 to 12 amino acids from the N-terminal of preflagellin, usually at Arg-Gly-|- or Lys-Gly-|-, to release flagellin.. Its function is as follows. Cleaves the N-terminal leader peptide from preflagellins. The protein is Preflagellin peptidase (flaK) of Methanococcus maripaludis (strain C6 / ATCC BAA-1332).